The chain runs to 257 residues: Large ribosomal subunit protein uL2 (257 aa).

The disordered stretch occupies residues 207 to 226 (VEHPFGGGNHQHIGKPSTIR).

This sequence belongs to the universal ribosomal protein uL2 family. In terms of assembly, component of the large ribosomal subunit.

Its subcellular location is the cytoplasm. Its function is as follows. Component of the large ribosomal subunit. The ribosome is a large ribonucleoprotein complex responsible for the synthesis of proteins in the cell. In Ictalurus punctatus (Channel catfish), this protein is Large ribosomal subunit protein uL2 (rpl8).